A 188-amino-acid chain; its full sequence is MPIKSDKWIRRMAESHQLIYPFEPKQVRETPSGKVISYGTSSYGYDVRCADEFKIFTNINASIVDPKNFDPNGFIDLKANVCIIPPNSFVLARTVEYFKIPRNILTICLGKSTYARCGIIVNVTPLEPEWEGHVTLEFSNTTNLPAKIYANEGVAQMLFLESDEVCDISYKDRGGKYQGQKGVTLPVA.

DCTP is bound by residues 111 to 116 (KSTYAR), 135 to 137 (TLE), Q156, Y170, and Q180. E137 functions as the Proton donor/acceptor in the catalytic mechanism.

Belongs to the dCTP deaminase family. Homotrimer.

The enzyme catalyses dCTP + H2O + H(+) = dUTP + NH4(+). It functions in the pathway pyrimidine metabolism; dUMP biosynthesis; dUMP from dCTP (dUTP route): step 1/2. Its function is as follows. Catalyzes the deamination of dCTP to dUTP. This is dCTP deaminase from Coxiella burnetii (strain CbuK_Q154) (Coxiella burnetii (strain Q154)).